We begin with the raw amino-acid sequence, 454 residues long: Bifunctional protein GlmU (454 aa).

Residues Met1–Arg226 are pyrophosphorylase. Residues Leu8–Gly11, Lys22, Gln73, Gly78–Thr79, Tyr99–Asp101, Gly136, Glu151, Asn166, and Asn224 contribute to the UDP-N-acetyl-alpha-D-glucosamine site. Mg(2+) is bound at residue Asp101. Asn224 contributes to the Mg(2+) binding site. Positions Leu227–Gln247 are linker. Positions Gly248–Lys454 are N-acetyltransferase. Positions 330 and 348 each coordinate UDP-N-acetyl-alpha-D-glucosamine. His360 functions as the Proton acceptor in the catalytic mechanism. The UDP-N-acetyl-alpha-D-glucosamine site is built by Tyr363 and Asn374. Acetyl-CoA contacts are provided by residues Ala377, Asn383–Tyr384, Ser402, Ala420, and Arg437.

It in the N-terminal section; belongs to the N-acetylglucosamine-1-phosphate uridyltransferase family. The protein in the C-terminal section; belongs to the transferase hexapeptide repeat family. In terms of assembly, homotrimer. The cofactor is Mg(2+).

The protein localises to the cytoplasm. The enzyme catalyses alpha-D-glucosamine 1-phosphate + acetyl-CoA = N-acetyl-alpha-D-glucosamine 1-phosphate + CoA + H(+). It catalyses the reaction N-acetyl-alpha-D-glucosamine 1-phosphate + UTP + H(+) = UDP-N-acetyl-alpha-D-glucosamine + diphosphate. It participates in nucleotide-sugar biosynthesis; UDP-N-acetyl-alpha-D-glucosamine biosynthesis; N-acetyl-alpha-D-glucosamine 1-phosphate from alpha-D-glucosamine 6-phosphate (route II): step 2/2. Its pathway is nucleotide-sugar biosynthesis; UDP-N-acetyl-alpha-D-glucosamine biosynthesis; UDP-N-acetyl-alpha-D-glucosamine from N-acetyl-alpha-D-glucosamine 1-phosphate: step 1/1. It functions in the pathway bacterial outer membrane biogenesis; LPS lipid A biosynthesis. Functionally, catalyzes the last two sequential reactions in the de novo biosynthetic pathway for UDP-N-acetylglucosamine (UDP-GlcNAc). The C-terminal domain catalyzes the transfer of acetyl group from acetyl coenzyme A to glucosamine-1-phosphate (GlcN-1-P) to produce N-acetylglucosamine-1-phosphate (GlcNAc-1-P), which is converted into UDP-GlcNAc by the transfer of uridine 5-monophosphate (from uridine 5-triphosphate), a reaction catalyzed by the N-terminal domain. This Azotobacter vinelandii (strain DJ / ATCC BAA-1303) protein is Bifunctional protein GlmU.